A 428-amino-acid chain; its full sequence is Tyrosine--tRNA ligase (428 aa).

Tyr-36 is an L-tyrosine binding site. The 'HIGH' region motif lies at 41-50; that stretch reads PTAPSLHAGH. The L-tyrosine site is built by Tyr-171 and Gln-175. A 'KMSKS' region motif is present at residues 231–235; sequence KFGKS. Lys-234 provides a ligand contact to ATP. The 58-residue stretch at 359 to 416 folds into the S4 RNA-binding domain; it reads DSIVDLLVETGLAASKGAARRNVAEGGVYVNNIRIESDEWIPQHSDFLHERWLVLRRG.

This sequence belongs to the class-I aminoacyl-tRNA synthetase family. TyrS type 1 subfamily. As to quaternary structure, homodimer.

Its subcellular location is the cytoplasm. The catalysed reaction is tRNA(Tyr) + L-tyrosine + ATP = L-tyrosyl-tRNA(Tyr) + AMP + diphosphate + H(+). In terms of biological role, catalyzes the attachment of tyrosine to tRNA(Tyr) in a two-step reaction: tyrosine is first activated by ATP to form Tyr-AMP and then transferred to the acceptor end of tRNA(Tyr). The sequence is that of Tyrosine--tRNA ligase from Mycolicibacterium fortuitum (Mycobacterium fortuitum).